The sequence spans 544 residues: Chaperonin GroEL (544 aa).

Residues 30–33, lysine 51, 87–91, glycine 415, 479–481, and aspartate 495 each bind ATP; these read TLGP, DGTTT, and NAA.

This sequence belongs to the chaperonin (HSP60) family. Forms a cylinder of 14 subunits composed of two heptameric rings stacked back-to-back. Interacts with the co-chaperonin GroES.

It localises to the cytoplasm. It catalyses the reaction ATP + H2O + a folded polypeptide = ADP + phosphate + an unfolded polypeptide.. Its function is as follows. Together with its co-chaperonin GroES, plays an essential role in assisting protein folding. The GroEL-GroES system forms a nano-cage that allows encapsulation of the non-native substrate proteins and provides a physical environment optimized to promote and accelerate protein folding. The polypeptide is Chaperonin GroEL (Acinetobacter baumannii (strain AB307-0294)).